Here is an 891-residue protein sequence, read N- to C-terminus: Tubulin polyglutamylase TTLL6 (891 aa).

Disordered stretches follow at residues 1–25 and 44–106; these read MGAL…SSPA and SQAR…KRKK. Residues 63-76 show a composition bias toward basic and acidic residues; the sequence is SEEKGDSSKEDPKE. Residues 88 to 99 show a composition bias toward low complexity; sequence GAQNGLQNAQQQ. Residues 106-449 enclose the TTL domain; sequence KKRLVINLSS…ESCDKKKVLE (344 aa). ATP contacts are provided by residues Lys223, 229 to 230, 251 to 254, and 264 to 266; these read QG, QLYI, and KFD. Gln229 contributes to the a protein binding site. Arg290 contacts L-glutamate. 312–313 contributes to the ATP binding site; the sequence is TN. L-glutamate contacts are provided by Tyr314, Ser315, and Lys332. Mg(2+) contacts are provided by Asp395, Glu408, and Asn410. His411 contributes to the a protein binding site. Residues 420 to 499 are c-MTBD region; that stretch reads RLDKEVKDGL…CGGFRLIYPS (80 aa). Residue Lys426 participates in L-glutamate binding. Disordered regions lie at residues 546 to 584, 607 to 636, 687 to 711, and 800 to 820; these read QMKK…ATQA, GERK…LTSA, TTPE…TASS, and NNLS…DSSG. The segment covering 687–699 has biased composition (polar residues); the sequence is TTPESTTQLSISP.

Belongs to the tubulin--tyrosine ligase family. Found in a complex with CEP41. Mg(2+) is required as a cofactor.

The protein resides in the cytoplasm. Its subcellular location is the cytoskeleton. It localises to the cilium axoneme. It is found in the cilium basal body. It carries out the reaction L-glutamyl-[protein] + L-glutamate + ATP = gamma-L-glutamyl-L-glutamyl-[protein] + ADP + phosphate + H(+). The catalysed reaction is (L-glutamyl)(n)-gamma-L-glutamyl-L-glutamyl-[protein] + L-glutamate + ATP = (L-glutamyl)(n+1)-gamma-L-glutamyl-L-glutamyl-[protein] + ADP + phosphate + H(+). In terms of biological role, polyglutamylase which modifies both tubulin and non-tubulin proteins, generating alpha-linked polyglutamate side chains on the gamma-carboxyl group of specific glutamate residues of target proteins. Preferentially mediates ATP-dependent long polyglutamate chain elongation over the initiation step of the polyglutamylation reaction. Preferentially modifies the alpha-tubulin tail over a beta-tail. Promotes tubulin polyglutamylation which stimulates spastin/SPAST-mediated microtubule severing, thereby regulating microtubule functions. Mediates microtubule polyglutamylation in primary cilia axoneme, which is important for ciliary structural formation and motility. Mediates microtubule polyglutamylation in motile cilia, necessary for the regulation of ciliary coordinated beating. Polyglutamylates non-tubulin protein nucleotidyltransferase CGAS, leading to CGAS DNA-binding inhibition, thereby preventing antiviral defense response. The protein is Tubulin polyglutamylase TTLL6 of Homo sapiens (Human).